The following is a 347-amino-acid chain: Phenylalanine--tRNA ligase alpha subunit (347 aa).

A Mg(2+)-binding site is contributed by Glu261.

Belongs to the class-II aminoacyl-tRNA synthetase family. Phe-tRNA synthetase alpha subunit type 1 subfamily. As to quaternary structure, tetramer of two alpha and two beta subunits. The cofactor is Mg(2+).

It localises to the cytoplasm. The enzyme catalyses tRNA(Phe) + L-phenylalanine + ATP = L-phenylalanyl-tRNA(Phe) + AMP + diphosphate + H(+). This chain is Phenylalanine--tRNA ligase alpha subunit, found in Streptococcus uberis (strain ATCC BAA-854 / 0140J).